The sequence spans 121 residues: Basic phospholipase A2 daboxin P (121 aa).

7 disulfides stabilise this stretch: Cys26–Cys115, Cys28–Cys44, Cys43–Cys95, Cys49–Cys121, Cys50–Cys88, Cys57–Cys81, and Cys75–Cys86. Residues Tyr27, Gly29, and Gly31 each coordinate Ca(2+). His47 is an active-site residue. Asp48 provides a ligand contact to Ca(2+). Asp89 is a catalytic residue.

The cofactor is Ca(2+). In terms of tissue distribution, expressed by the venom gland.

Its subcellular location is the secreted. The catalysed reaction is a 1,2-diacyl-sn-glycero-3-phosphocholine + H2O = a 1-acyl-sn-glycero-3-phosphocholine + a fatty acid + H(+). In terms of biological role, snake venom phospholipase A2 (PLA2) that exhibits anticoagulant activity, probably by binding to factor X and its activated form factor Xa (F10). Shows no cytotoxicity. PLA2 catalyzes the calcium-dependent hydrolysis of the 2-acyl groups in 3-sn-phosphoglycerides. The protein is Basic phospholipase A2 daboxin P of Daboia russelii (Russel's viper).